Consider the following 265-residue polypeptide: MKIAIAGASGRMGRMLIEAVLNDADAQLVGALDRAGSPFLGQDAGAFVGKDTGIKLTDDLDAVFAQADYLIDFTRPEGTIAHIEAALRHDVKLVIGTTGFTAEQKAQLQAAAAKLGIVFAANMSVGVNVTLKLLEFAAQHFSHGYDIEIIEAHHRHKVDAPSGTALMMGEAVAGALGRSLDDCAVYGRHGVTGERDPSSIGFAAVRGGDIVGDHTVLFAGIGERIEITHKSSSRVSYAQGALRAVRFLSARGAGLFDMQDVLGLR.

NAD(+) is bound by residues 7–12 and D33; that span reads GASGRM. R34 lines the NADP(+) pocket. Residues 96–98 and 120–123 contribute to the NAD(+) site; these read GTT and AANM. H153 (proton donor/acceptor) is an active-site residue. Residue H154 participates in (S)-2,3,4,5-tetrahydrodipicolinate binding. Catalysis depends on K157, which acts as the Proton donor. 163–164 is a (S)-2,3,4,5-tetrahydrodipicolinate binding site; the sequence is GT.

Belongs to the DapB family.

The protein resides in the cytoplasm. It carries out the reaction (S)-2,3,4,5-tetrahydrodipicolinate + NAD(+) + H2O = (2S,4S)-4-hydroxy-2,3,4,5-tetrahydrodipicolinate + NADH + H(+). It catalyses the reaction (S)-2,3,4,5-tetrahydrodipicolinate + NADP(+) + H2O = (2S,4S)-4-hydroxy-2,3,4,5-tetrahydrodipicolinate + NADPH + H(+). The protein operates within amino-acid biosynthesis; L-lysine biosynthesis via DAP pathway; (S)-tetrahydrodipicolinate from L-aspartate: step 4/4. Functionally, catalyzes the conversion of 4-hydroxy-tetrahydrodipicolinate (HTPA) to tetrahydrodipicolinate. The sequence is that of 4-hydroxy-tetrahydrodipicolinate reductase from Burkholderia vietnamiensis (strain G4 / LMG 22486) (Burkholderia cepacia (strain R1808)).